Consider the following 91-residue polypeptide: Potassium channel toxin BuTXK-beta (91 aa).

An N-terminal signal peptide occupies residues 1 to 20; the sequence is MQRNLVVLLLLGMVALSSCG. A propeptide spanning residues 21–27 is cleaved from the precursor; the sequence is LREKHFQ. Residues 54–91 form the BetaSPN-type CS-alpha/beta domain; it reads QFGCPAYQGYCDDHCQDIKKEEGFCHGMKCKCGIPMGF. 3 disulfide bridges follow: Cys-57/Cys-78, Cys-64/Cys-83, and Cys-68/Cys-85.

It belongs to the long chain scorpion toxin family. Class 1 subfamily. Expressed by the venom gland.

It localises to the secreted. Inhibits voltage-gated potassium channel. In Buthus israelis (Israeli scorpion), this protein is Potassium channel toxin BuTXK-beta.